Consider the following 669-residue polypeptide: Zeaxanthin epoxidase, chloroplastic (669 aa).

Residues 1-49 (MYSTVFYTSVHPSTSVLSRKQLPLLISKDFSAELYHSLPCRSLENGHIN) constitute a chloroplast transit peptide. Residues 87 to 115 (KVLVAGGGIGGLVFALAAKKRGFDVLVFE) and 365 to 378 (TFSWGRGRVTLLGD) contribute to the FAD site. Residues 553–617 (IVLSRDEDVP…HGTWVTDNEG (65 aa)) form the FHA domain.

FAD is required as a cofactor.

It is found in the plastid. The protein localises to the chloroplast. The enzyme catalyses all-trans-zeaxanthin + 4 reduced [2Fe-2S]-[ferredoxin] + 2 O2 + 4 H(+) = all-trans-violaxanthin + 4 oxidized [2Fe-2S]-[ferredoxin] + 2 H2O. Its pathway is plant hormone biosynthesis; abscisate biosynthesis. Converts zeaxanthin into antheraxanthin and subsequently violaxanthin. Involved in the epoxidation of zeaxanthin. Plays an important role in resistance to stresses, seed development and dormancy. This is Zeaxanthin epoxidase, chloroplastic from Solanum lycopersicum (Tomato).